Reading from the N-terminus, the 677-residue chain is Fermitin family homolog 1 (677 aa).

The FERM domain maps to 96 to 653 (MLRLRLPNLK…HEYIGGYIFL (558 aa)). Phosphoserine is present on residues S170, S179, and S361. Residues 337-433 (ESEVDEIEAA…EVVPNVNVAE (97 aa)) form the PH domain.

Belongs to the kindlin family. Interacts with the cytoplasmic domain of integrins ITGB1 and ITGB3.

It is found in the cytoplasm. Its subcellular location is the cytoskeleton. It localises to the cell junction. The protein resides in the focal adhesion. The protein localises to the cell projection. It is found in the ruffle membrane. Its function is as follows. Involved in cell adhesion. Contributes to integrin activation. When coexpressed with talin, potentiates activation of ITGA2B. Required for normal keratinocyte proliferation. Required for normal polarization of basal keratinocytes in skin, and for normal cell shape. Required for normal adhesion of keratinocytes to fibronectin and laminin, and for normal keratinocyte migration to wound sites. This Pongo abelii (Sumatran orangutan) protein is Fermitin family homolog 1 (FERMT1).